Reading from the N-terminus, the 890-residue chain is Phosphatidate phosphatase LPIN1 (890 aa).

Residues Met1–Ile108 form an N-LIP region. 2 positions are modified to phosphoserine: Ser106 and Ser150. 4 disordered regions span residues Val125–Pro183, Ser228–Lys300, Lys365–Leu392, and Ser421–Asp456. The segment covering Val152–Lys161 has biased composition (basic residues). The short motif at Lys153–Arg158 is the Nuclear localization signal element. 2 stretches are compositionally biased toward basic and acidic residues: residues Ser162–Asn172 and Ser252–Gly265. Phosphoserine is present on residues Ser252, Ser254, and Ser260. Thr264 is modified (phosphothreonine). Residue Ser294 is modified to Phosphoserine. Lys425 bears the N6-acetyllysine mark. Over residues Gly431 to Gln440 the composition is skewed to polar residues. Phosphoserine is present on residues Ser434, Ser438, and Ser449. The span at Ser441–Asp456 shows a compositional bias: low complexity. Residue Lys565 forms a Glycyl lysine isopeptide (Lys-Gly) (interchain with G-Cter in SUMO) linkage. The tract at residues Glu566–Leu616 is disordered. Positions Thr581–Leu590 are enriched in polar residues. Basic and acidic residues predominate over residues Val594–Ala607. Position 595 is an N6-acetyllysine (Lys595). Lys595 participates in a covalent cross-link: Glycyl lysine isopeptide (Lys-Gly) (interchain with G-Cter in SUMO). 2 positions are modified to phosphoserine: Ser600 and Ser601. A C-LIP region spans residues Tyr624–Glu830. The DXDXT motif signature appears at Asp678–Thr682. The short motif at Leu689–Leu693 is the LXXIL motif element. Phosphoserine occurs at positions 887 and 889.

Belongs to the lipin family. Interacts (via LXXIL motif) with PPARA. Interacts with PPARGC1A. Interaction with PPARA and PPARGC1A leads to the formation of a complex that modulates gene transcription. Interacts with MEF2C. The cofactor is Mg(2+). It depends on Mn(2+) as a cofactor. Post-translationally, phosphorylated at multiple sites by mTOR in response to insulin, leading to its inactivation. Phosphorylation does not affect the catalytic activity but regulates the localization. Phosphorylation is decreased by epinephrine. Dephosphorylated by the CTDNEP1-CNEP1R1 complex. Dephosphorylation following mTOR inhibition promotes its activity. In terms of processing, acetylation at Lys-425 and Lys-595 by KAT5 in response to fatty acids promotes translocation to the endoplasmic reticulum and synthesis of diacylglycerol. Sumoylated. In terms of tissue distribution, specifically expressed in skeletal muscle. Also abundant in adipose tissue. Lower levels in some portions of the digestive tract.

It localises to the cytoplasm. The protein resides in the cytosol. The protein localises to the endoplasmic reticulum membrane. Its subcellular location is the nucleus membrane. It carries out the reaction a 1,2-diacyl-sn-glycero-3-phosphate + H2O = a 1,2-diacyl-sn-glycerol + phosphate. The catalysed reaction is 1-octadecanoyl-2-(4Z,7Z,10Z,13Z,16Z,19Z-docosahexaenoyl)-sn-glycero-3-phosphate + H2O = 1-octadecanoyl-2-(4Z,7Z,10Z,13Z,16Z,19Z-docosahexaenoyl)-sn-glycerol + phosphate. The enzyme catalyses 1-octadecanoyl-2-(5Z,8Z,11Z,14Z-eicosatetraenoyl)-sn-glycero-3-phosphate + H2O = 1-octadecanoyl-2-(5Z,8Z,11Z,14Z-eicosatetraenoyl)-sn-glycerol + phosphate. It catalyses the reaction 1-octadecanoyl-2-(9Z,12Z-octadecadienoyl)-sn-glycero-3-phosphate + H2O = 1-octadecanoyl-2-(9Z,12Z)-octadecadienoyl-sn-glycerol + phosphate. It carries out the reaction 1-octadecanoyl-2-(9Z-octadecenoyl)-sn-glycero-3-phosphate + H2O = 1-octadecanoyl-2-(9Z-octadecenoyl)-sn-glycerol + phosphate. The catalysed reaction is 1-hexadecanoyl-2-(4Z,7Z,10Z,13Z,16Z,19Z-docosahexaenoyl)-sn-glycero-3-phosphate + H2O = 1-hexadecanoyl-2-(4Z,7Z,10Z,13Z,16Z,19Z-docosahexaenoyl)-sn-glycerol + phosphate. The enzyme catalyses 1,2-dioctadecanoyl-sn-glycero-3-phosphate + H2O = 1,2-dioctadecanoyl-sn-glycerol + phosphate. It catalyses the reaction 1-hexadecanoyl-2-(5Z,8Z,11Z,14Z-eicosatetraenoyl)-sn-glycero-3-phosphate + H2O = 1-hexadecanoyl-2-(5Z,8Z,11Z,14Z-eicosatetraenoyl)-sn-glycerol + phosphate. It carries out the reaction 1-hexadecanoyl-2-(9Z,12Z-octadecadienoyl)-sn-glycero-3-phosphate + H2O = 1-hexadecanoyl-2-(9Z,12Z-octadecadienoyl)-sn-glycerol + phosphate. The catalysed reaction is 1-hexadecanoyl-2-(9Z-octadecenoyl)-sn-glycero-3-phosphate + H2O = 1-hexadecanoyl-2-(9Z-octadecenoyl)-sn-glycerol + phosphate. The enzyme catalyses 1,2-di-(4Z,7Z,10Z,13Z,16Z,19Z-docosahexaenoyl)-sn-glycero-3-phosphate + H2O = 1,2-di-(4Z,7Z,10Z,13Z,16Z,19Z-docosahexaenoyl)-sn-glycerol + phosphate. It catalyses the reaction 1,2-di-(5Z,8Z,11Z,14Z)-eicosatetraenoyl-sn-glycero-3-phosphate + H2O = 1,2-di-(5Z,8Z,11Z,14Z)-eicosatetraenoyl-sn-glycerol + phosphate. It carries out the reaction 1,2-di-(9Z,12Z-octadecadienoyl)-sn-glycero-3-phosphate + H2O = 1,2-di-(9Z,12Z-octadecadienoyl)-sn-glycerol + phosphate. The catalysed reaction is 1,2-di-(9Z-octadecenoyl)-sn-glycero-3-phosphate + H2O = 1,2-di-(9Z-octadecenoyl)-sn-glycerol + phosphate. The enzyme catalyses 1,2-dihexadecanoyl-sn-glycero-3-phosphate + H2O = 1,2-dihexadecanoyl-sn-glycerol + phosphate. Its activity is regulated as follows. Potently inhibited by sphingolipids, in particular, the sphingoid bases sphinganine and sphingosine and ceramide-1-phosphate. Inhibited by concentrations of Mg(2+) and Mn(2+) above their optimums and by Ca(2+), Zn(2+), N-ethylmaleimide and propranolol. With respect to regulation, sertraline and propanolol inhibit activity in dose-dependent manners with IC(50) values of 103 uM and 226 uM, respectively. Sertraline and propanolol inhibit activity in dose-dependent manners with IC(50) values of 108 uM and 271 uM, respectively. Its activity is regulated as follows. Sertraline and propanolol inhibit activity in dose-dependent manners with IC(50) values of 143 uM and 227 uM, respectively. Its function is as follows. Acts as a magnesium-dependent phosphatidate phosphatase enzyme which catalyzes the conversion of phosphatidic acid to diacylglycerol during triglyceride, phosphatidylcholine and phosphatidylethanolamine biosynthesis and therefore controls the metabolism of fatty acids at different levels. Is involved in adipocyte differentiation. Recruited at the mitochondrion outer membrane and is involved in mitochondrial fission by converting phosphatidic acid to diacylglycerol. Acts also as nuclear transcriptional coactivator for PPARGC1A/PPARA regulatory pathway to modulate lipid metabolism gene expression. This Homo sapiens (Human) protein is Phosphatidate phosphatase LPIN1.